Here is a 1667-residue protein sequence, read N- to C-terminus: Androglobin (1667 aa).

Residues 1–11 (MASKQTKKKEV) show a composition bias toward basic residues. Disordered stretches follow at residues 1–45 (MASK…KGKF), 347–387 (SLTT…KFSL), and 540–566 (GSDLPSVSETDETATHSQTDLSQITKA). In terms of domain architecture, Calpain catalytic spans 70–411 (KDKTGKSPVF…SLSDCSSAIQ (342 aa)). Positions 353–384 (APEKSDKVPKEKADARDIGKKRSKDGEKEKFK) are enriched in basic and acidic residues. The segment covering 554-566 (THSQTDLSQITKA) has biased composition (polar residues). One can recognise a Globin; C-terminal part domain in the interval 763–890 (HICSMVSFVI…EEVSLVEWLD (128 aa)). 2 residues coordinate heme b: Gln792 and His824. The region spanning 906–935 (EVAAAIKIQAMWRGTYVRLLMKARIPDTKE) is the IQ domain. Positions 936-968 (NISVADTLQKVWAVLEMNLEQYAVSLLRLMFKS) constitute a Globin; N-terminal part domain. 2 disordered regions span residues 1297-1355 (INLG…QQED) and 1420-1522 (TSDA…RSPT). Residues 1301–1315 (SPDSHTISEGQKSSV) show a composition bias toward polar residues. Composition is skewed to basic and acidic residues over residues 1325-1340 (EKSSEKEKTAKEKQAP) and 1433-1450 (TKPKEEVETAARGVKEPN). Residues 1451 to 1468 (SKNSAGSESKEMTQTGSG) are compositionally biased toward polar residues. Over residues 1487–1498 (STSSESGGVSSP) the composition is skewed to low complexity. The span at 1499-1511 (GKEEREQSTRKEN) shows a compositional bias: basic and acidic residues. Residues 1512 to 1522 (IQTGPRTRSPT) are compositionally biased toward polar residues. Residues 1588–1629 (QEERLKLKDEVLDMYKEMQDSLDEARQKIFDIREEYRNKLLE) adopt a coiled-coil conformation. Residues 1646–1667 (KLETEKMTPAPDTQKKKKGKKK) are disordered.

It in the central section; belongs to the globin family. The protein in the N-terminal section; belongs to the peptidase C2 family. Interacts with septin SEPT10; contributes to in vitro proteolytic cleavage of SEPT10 in a calmodulin-dependent manner. Interacts with CFAP69. Interacts with SPEF2. May interact with calmodulin.

It is found in the cell projection. The protein localises to the cilium. Its subcellular location is the flagellum. Functionally, probable chimeric globin with a bis-histidyl six-coordinate heme-iron atom through which it could bind dioxygen, carbon monoxide and nitric oxide. Required for sperm flagellum formation and maturation of elongating spermatids, thus playing an essential role in male fertility. In Homo sapiens (Human), this protein is Androglobin.